A 2171-amino-acid chain; its full sequence is Voltage-dependent L-type calcium channel subunit alpha-1C (2171 aa).

The Cytoplasmic portion of the chain corresponds to 1 to 154 (MLRALVQPAT…RACISIVEWK (154 aa)). Residues 77–98 (GAALSWQAAIDAARQAKLMGSA) are calmodulin-binding. Positions 103–128 (ISTVSSTQRKRQQYGKPKKQGSTTAT) are disordered. A compositionally biased stretch (basic residues) spans 110-121 (QRKRQQYGKPKK). The I repeat unit spans residues 141–438 (NPIRRACISI…LVLGVLSGEF (298 aa)). Residues 155-173 (PFEIIILLTIFANCVALAI) traverse the membrane as a helical segment. At 174 to 188 (YIPFPEDDSNATNSN) the chain is on the extracellular side. A glycan (N-linked (GlcNAc...) asparagine) is linked at Asn183. The chain crosses the membrane as a helical span at residues 189–209 (LERVEYLFLIIFTVEAFLKVI). At 210–218 (AYGLLFHPN) the chain is on the cytoplasmic side. Residues 219-239 (AYLRNGWNLLDFIIVVVGLFS) form a helical membrane-spanning segment. At 240–262 (AILEQATKADGANALGGKGAGFD) the chain is on the extracellular side. The chain crosses the membrane as a helical span at residues 263-281 (VKALRAFRVLRPLRLVSGV). At 282-298 (PSLQVVLNSIIKAMVPL) the chain is on the cytoplasmic side. A helical transmembrane segment spans residues 299 to 320 (LHIALLVLFVIIIYAIIGLELF). Over 321-380 (MGKMHKTCYNQEGVADVPAEDDPSPCALETGHGRQCQNGTVCKPGWDGPKHGITNFDNFA) the chain is Extracellular. Cystine bridges form between Cys328/Cys356 and Cys346/Cys362. Residue Asn358 is glycosylated (N-linked (GlcNAc...) asparagine). Positions 381–402 (FAMLTVFQCITMEGWTDVLYWM) form an intramembrane region, pore-forming. A Selectivity filter of repeat I motif is present at residues 391–394 (TMEG). Glu393 lines the Ca(2+) pocket. Residues 403–410 (QDAMGYEL) are Extracellular-facing. A helical transmembrane segment spans residues 411 to 431 (PWVYFVSLVIFGSFFVLNLVL). Over 432–554 (GVLSGEFSKE…RKCRAAVKSN (123 aa)) the chain is Cytoplasmic. The AID/alpha-interaction domain; mediates interaction with the beta subunit stretch occupies residues 458 to 475 (QQLEEDLKGYLDWITQAE). Positions 479–511 (PENEDEGMDEEKPRNMSMPTSETESVNTENVAG) are disordered. Over residues 495–508 (SMPTSETESVNTEN) the composition is skewed to polar residues. Ser499 carries the phosphoserine modification. A Phosphothreonine modification is found at Thr506. The II repeat unit spans residues 540 to 786 (NRFCRRKCRA…VFLAIAVDNL (247 aa)). A helical membrane pass occupies residues 555–573 (VFYWLVIFLVFLNTLTIAS). Residues 574–584 (EHYNQPHWLTE) lie on the Extracellular side of the membrane. A helical membrane pass occupies residues 585 to 605 (VQDTANKALLALFTAEMLLKM). Residues 606–616 (YSLGLQAYFVS) lie on the Cytoplasmic side of the membrane. A helical transmembrane segment spans residues 617–636 (LFNRFDCFIVCGGILETILV). Topologically, residues 637–645 (ETKVMSPLG) are extracellular. A helical transmembrane segment spans residues 646–664 (ISVLRCVRLLRIFKITRYW). The Cytoplasmic segment spans residues 665–683 (NSLSNLVASLLNSVRSIAS). The chain crosses the membrane as a helical span at residues 684–703 (LLLLLFLFIIIFSLLGMQLF). At 704–723 (GGKFNFDEMQTRRSTFDNFP) the chain is on the extracellular side. The pore-forming intramembrane region spans 724 to 745 (QSLLTVFQILTGEDWNSVMYDG). The Selectivity filter of repeat II signature appears at 734–737 (TGED). Residue Glu736 coordinates Ca(2+). The Extracellular portion of the chain corresponds to 746-755 (IMAYGGPSFP). The helical transmembrane segment at 756 to 775 (GMLVCIYFIILFICGNYILL) threads the bilayer. The Cytoplasmic segment spans residues 776 to 930 (NVFLAIAVDN…LQCHRIVNDT (155 aa)). A disordered region spans residues 794-891 (SAQKEEEEEK…EMPVGPRPRP (98 aa)). Over residues 813–836 (SPEKKQEVVGKPALEEAKEEKIEL) the composition is skewed to basic and acidic residues. Ser838 and Ser845 each carry phosphoserine. An interaction with STAC2 region spans residues 859–906 (NESEDKSPYPNPETTGEEDEEEPEMPVGPRPRPLSELHLKEKAVPMPE). Over residues 873-882 (TGEEDEEEPE) the composition is skewed to acidic residues. One copy of the III repeat lies at 917–1199 (NRFRLQCHRI…IFVGFVIVTF (283 aa)). Residues 931-949 (IFTNLILFFILLSSISLAA) form a helical membrane-spanning segment. Residues 950-961 (EDPVQHTSFRNH) are Extracellular-facing. The helical transmembrane segment at 962-981 (ILFYFDIVFTTIFTIEIALK) threads the bilayer. The Cytoplasmic portion of the chain corresponds to 982–997 (MTAYGAFLHKGSFCRN). A helical membrane pass occupies residues 998-1016 (YFNILDLLVVSVSLISFGI). Residues 1017-1023 (QSSAINV) are Extracellular-facing. The helical transmembrane segment at 1024 to 1042 (VKILRVLRVLRPLRAINRA) threads the bilayer. Over 1043–1061 (KGLKHVVQCVFVAIRTIGN) the chain is Cytoplasmic. The chain crosses the membrane as a helical span at residues 1062 to 1081 (IVIVTTLLQFMFACIGVQLF). The Extracellular segment spans residues 1082–1131 (KGKLYTCSDSSKQTEAECKGNYITYKDGEVDHPIIQPRSWENSKFDFDNV). A disulfide bridge connects residues Cys1088 and Cys1099. The dihydropyridine binding stretch occupies residues 1119 to 1208 (RSWENSKFDF…FQEQGEQEYK (90 aa)). An intramembrane region (pore-forming) is located at residues 1132 to 1152 (LAAMMALFTVSTFEGWPELLY). A Selectivity filter of repeat III motif is present at residues 1143-1146 (TFEG). Residue Glu1145 participates in Ca(2+) binding. At 1153–1169 (RSIDSHTEDKGPIYNYR) the chain is on the extracellular side. Residues 1170 to 1191 (VEISIFFIIYIIIIAFFMMNIF) form a helical membrane-spanning segment. Residues 1192 to 1249 (VGFVIVTFQEQGEQEYKNCELDKNQRQCVEYALKARPLRRYIPKNQHQYKVWYVVNST) are Cytoplasmic-facing. The IV repeat unit spans residues 1236–1509 (NQHQYKVWYV…LFVAVIMDNF (274 aa)). A helical transmembrane segment spans residues 1250-1271 (YFEYLMFVLILLNTICLAMQHY). At 1272-1279 (GQSCLFKI) the chain is on the extracellular side. Residues 1280–1301 (AMNILNMLFTGLFTVEMILKLI) form a helical membrane-spanning segment. At 1302-1311 (AFKPKGYFSD) the chain is on the cytoplasmic side. Residues 1312–1331 (PWNVFDFLIVIGSIIDVILS) traverse the membrane as a helical segment. Residues 1332 to 1354 (ETNPAEHTQCSPSMNAEENSRIS) lie on the Extracellular side of the membrane. The chain crosses the membrane as a helical span at residues 1355-1373 (ITFFRLFRVMRLVKLLSRG). The Cytoplasmic portion of the chain corresponds to 1374–1391 (EGIRTLLWTFIKSFQALP). The chain crosses the membrane as a helical span at residues 1392-1412 (YVALLIVMLFFIYAVIGMQVF). The Extracellular portion of the chain corresponds to 1413-1434 (GKIALNDTTEINRNNNFQTFPQ). Residue Asn1418 is glycosylated (N-linked (GlcNAc...) asparagine). Residues 1435 to 1453 (AVLLLFRCATGEAWQDIML) constitute an intramembrane region (pore-forming). The Selectivity filter of repeat IV motif lies at 1444-1447 (TGEA). The Extracellular portion of the chain corresponds to 1454-1481 (ACMPGKKCAPESEPHNSTEGETPCGSSF). The tract at residues 1460–1528 (KCAPESEPHN…LGPHHLDEFK (69 aa)) is dihydropyridine binding. Cys1461 and Cys1477 are oxidised to a cystine. A glycan (N-linked (GlcNAc...) asparagine) is linked at Asn1469. Positions 1474–1516 (ETPCGSSFAVFYFISFYMLCAFLIINLFVAVIMDNFDYLTRDW) are phenylalkylamine binding. Residues 1482 to 1506 (AVFYFISFYMLCAFLIINLFVAVIM) traverse the membrane as a helical segment. Residues 1507-2171 (DNFDYLTRDW…ADRRAGVSSL (665 aa)) lie on the Cytoplasmic side of the membrane. Residues 1641 to 1668 (DEVTVGKFYATFLIQEYFRKFKKRKEQG) are important for interaction with STAC1, STAC2 and STAC3. The calmodulin-binding IQ region stretch occupies residues 1647 to 1667 (KFYATFLIQEYFRKFKKRKEQ). The important for localization in at the junctional membrane stretch occupies residues 1681–1700 (LQAGLRTLHDIGPEIRRAIS). A phosphoserine mark is found at Ser1700 and Ser1721. The interval 1760–1797 (ISKAGNNQGDTESPSHEKLVDSTFTPSSYSSTGSNANI) is disordered. Positions 1781 to 1793 (STFTPSSYSSTGS) are enriched in polar residues. Ser1928 is subject to Phosphoserine; by PKA. Disordered regions lie at residues 1971–2014 (RSHS…EKLN), 2026–2060 (SGEN…GRQF), and 2114–2155 (SGGA…PGCG). Residues 2130–2140 (NRRDPGRDRAG) are compositionally biased toward basic and acidic residues.

It belongs to the calcium channel alpha-1 subunit (TC 1.A.1.11) family. CACNA1C subfamily. In terms of assembly, component of a calcium channel complex consisting of a pore-forming alpha subunit (CACNA1C) and ancillary beta, gamma and delta subunits. The channel complex contains alpha, beta, gamma and delta subunits in a 1:1:1:1 ratio, i.e. it contains only one of each type of subunit. CACNA1C channel activity is modulated by ancillary subunits, such as CACNB1, CACNB2, CACNB3, CACNA2D1 and CACNA2D4. Interacts with CACNB1. Interacts with CACNB2. Identified in a complex with CACNA2D4 and CACNB3. Interacts with CACNB3. Interacts with CACNA2D1. Interacts with the gamma subunits CACNG4, CACNG6, CACNG7 and CACNG8. Interacts with CACNA2D4. Interacts with CALM1. Interacts (via the N-terminus and the C-terminal C and IQ motifs) with CABP1; this inhibits Ca(2+)-dependent channel inactivation. The binding via the C motif is calcium independent whereas the binding via IQ requires the presence of calcium and is mutually exclusive with calmodulin binding. The binding to the cytoplasmic N-terminal domain is calcium independent but is essential for the channel modulation. Interacts (via C-terminal CDB motif) with CABP5; in a calcium-dependent manner. Interacts with CIB1; the interaction increases upon cardiomyocytes hypertrophy. Interacts with STAC1, STAC2 and STAC3; this inhibits channel inactivation, probably by hindering CALM1 binding. Phosphorylation by PKA at Ser-1928 activates the channel. Elevated levels of blood glucose lead to increased phosphorylation by PKA. In terms of tissue distribution, expression in cardiac muscle. In lung, expressed in airway and vascular smooth muscle cells.

Its subcellular location is the cell membrane. The protein localises to the sarcolemma. It is found in the perikaryon. It localises to the postsynaptic density membrane. The protein resides in the cell projection. Its subcellular location is the dendrite. The protein localises to the T-tubule. It catalyses the reaction Ca(2+)(in) = Ca(2+)(out). Its activity is regulated as follows. Inhibited by dihydropyridines (DHP), such as isradipine. Inhibited by nifedipine. Channel activity is regulated by Ca(2+) and calmodulin. Binding of STAC1, STAC2 or STAC3 to a region that overlaps with the calmodulin binding site inhibits channel inactivation by Ca(2+) and calmodulin. Binding of calmodulin or CABP1 at the same regulatory sites results in opposite effects on the channel function. Shear stress and pressure increases calcium channel activity. Pore-forming, alpha-1C subunit of the voltage-gated calcium channel that gives rise to L-type calcium currents. Mediates influx of calcium ions into the cytoplasm, and thereby triggers calcium release from the sarcoplasm. Plays an important role in excitation-contraction coupling in the heart. Required for normal heart development and normal regulation of heart rhythm. Required for normal contraction of smooth muscle cells in blood vessels and in the intestine. Essential for normal blood pressure regulation via its role in the contraction of arterial smooth muscle cells. Long-lasting (L-type) calcium channels belong to the 'high-voltage activated' (HVA) group. The polypeptide is Voltage-dependent L-type calcium channel subunit alpha-1C (CACNA1C) (Oryctolagus cuniculus (Rabbit)).